Reading from the N-terminus, the 133-residue chain is uncharacterized protein (133 aa).

The protein belongs to the ycf68 family.

The protein localises to the plastid. It is found in the chloroplast. This is an uncharacterized protein from Oryza sativa subsp. japonica (Rice).